We begin with the raw amino-acid sequence, 222 residues long: uncharacterized protein (222 aa).

This is an uncharacterized protein from Acanthamoeba polyphaga mimivirus (APMV).